The sequence spans 330 residues: Glycerol-3-phosphate dehydrogenase [NAD(P)+] (330 aa).

Residues S11, F12, R32, and K106 each coordinate NADPH. 3 residues coordinate sn-glycerol 3-phosphate: K106, G133, and S135. An NADPH-binding site is contributed by A137. The sn-glycerol 3-phosphate site is built by K188, D241, S251, R252, and N253. Catalysis depends on K188, which acts as the Proton acceptor. R252 serves as a coordination point for NADPH. The NADPH site is built by V276 and E278.

Belongs to the NAD-dependent glycerol-3-phosphate dehydrogenase family.

The protein resides in the cytoplasm. It catalyses the reaction sn-glycerol 3-phosphate + NAD(+) = dihydroxyacetone phosphate + NADH + H(+). It carries out the reaction sn-glycerol 3-phosphate + NADP(+) = dihydroxyacetone phosphate + NADPH + H(+). The protein operates within membrane lipid metabolism; glycerophospholipid metabolism. Catalyzes the reduction of the glycolytic intermediate dihydroxyacetone phosphate (DHAP) to sn-glycerol 3-phosphate (G3P), the key precursor for phospholipid synthesis. The sequence is that of Glycerol-3-phosphate dehydrogenase [NAD(P)+] from Clostridium botulinum (strain Eklund 17B / Type B).